The following is a 163-amino-acid chain: Protein-export protein SecB (163 aa).

This sequence belongs to the SecB family. Homotetramer, a dimer of dimers. One homotetramer interacts with 1 SecA dimer.

The protein resides in the cytoplasm. One of the proteins required for the normal export of preproteins out of the cell cytoplasm. It is a molecular chaperone that binds to a subset of precursor proteins, maintaining them in a translocation-competent state. It also specifically binds to its receptor SecA. The polypeptide is Protein-export protein SecB (Brucella abortus (strain S19)).